The sequence spans 518 residues: MADADEGFGLAHTPLEPDAKDLPCDSKPESALGAPSKSPSSPQAAFTQQGMEGIKVFLHERELWLKFHEVGTEMIITKAGRRMFPSYKVKVTGLNPKTKYILLMDIVPADDHRYKFADNKWSVTGKAEPAMPGRLYVHPDSPATGAHWMRQLVSFQKLKLTNNHLDPFGHIILNSMHKYQPRLHIVKADENNGFGSKNTAFCTHVFPETAFIAVTSYQNHKITQLKIENNPFAKGFRGSDDMELHRMSRMQSKEYPVVPRSTVRQKVASNHSPFSSESRALSTSSNLGSQYQCENGVSGPSQDLLPPPNPYPLPQEHSQIYHCTKRKEEECSTTDHPYKKPYMETSPSEEDSFYRSSYPQQQGLGASYRTESAQRQACMYASSAPPSEPVPSLEDISCNTWPSMPSYSSCTVTTVQPMDRLPYQHFSAHFTSGPLVPRLAGMANHGSPQLGEGMFQHQTSVAHQPVVRQCGPQTGLQSPGTLQPPEFLYSHGVPRTLSPHQYHSVHGVGMVPEWSDNS.

The segment at 1-46 is disordered; it reads MADADEGFGLAHTPLEPDAKDLPCDSKPESALGAPSKSPSSPQAAF. A compositionally biased stretch (basic and acidic residues) spans 15–28; the sequence is LEPDAKDLPCDSKP. Positions 34-45 are enriched in low complexity; sequence APSKSPSSPQAA. The segment at residues 58-238 is a DNA-binding region (T-box); the sequence is LHERELWLKF…NNPFAKGFRG (181 aa). The segment at 250–356 is disordered; the sequence is MQSKEYPVVP…PSEEDSFYRS (107 aa). The segment covering 262-301 has biased composition (polar residues); it reads TVRQKVASNHSPFSSESRALSTSSNLGSQYQCENGVSGPS. N6-acetyllysine is present on Lys339.

As to quaternary structure, monomer. Homodimer (via the T-box); binds DNA as homodimer. Interacts (via the T-box) with NKX2-5 (via the homeobox); this complex binds DNA. Interacts with GATA4. Interacts with KAT2A and KAT2B. Post-translationally, acetylation at Lys-339 by KAT2A and KAT2B promotes nuclear retention.

It is found in the nucleus. The protein resides in the cytoplasm. In terms of biological role, DNA-binding protein that regulates the transcription of several genes and is involved in heart development and limb pattern formation. Binds to the core DNA motif of NPPA promoter. The sequence is that of T-box transcription factor TBX5 (TBX5) from Homo sapiens (Human).